The chain runs to 314 residues: MKNLLSISDLTPNEILSIMDEADRFAEALKGREVKKLPTLRGRTVFTMFYENSTRTRASFETAGKWMSADVINISASSSSVKKGESLRDTALTLKSIGADALVMRHPSSGAAQHVANFIGDTAVINAGDGSNQHPTQALLDATTLRRQRGDLSGQHVVIVGDILHSRVARSNAQLLNALGADVTFVAPPTLLPIGVENWGVRVSHDLDAELPSADAVMMLRVQAERMNGGFFPSHREYATRYGLSKARHAMLKPDAVVMHPGPMLRGMEINYSVADAPNTVVLQQVTAGVHVRMAILFQLLIGGHSASETETDA.

2 residues coordinate carbamoyl phosphate: arginine 55 and threonine 56. Lysine 83 serves as a coordination point for L-aspartate. 3 residues coordinate carbamoyl phosphate: arginine 105, histidine 134, and glutamine 137. L-aspartate contacts are provided by arginine 167 and arginine 221. Carbamoyl phosphate is bound by residues glycine 262 and proline 263.

Belongs to the aspartate/ornithine carbamoyltransferase superfamily. ATCase family. As to quaternary structure, heterododecamer (2C3:3R2) of six catalytic PyrB chains organized as two trimers (C3), and six regulatory PyrI chains organized as three dimers (R2).

It catalyses the reaction carbamoyl phosphate + L-aspartate = N-carbamoyl-L-aspartate + phosphate + H(+). It participates in pyrimidine metabolism; UMP biosynthesis via de novo pathway; (S)-dihydroorotate from bicarbonate: step 2/3. Functionally, catalyzes the condensation of carbamoyl phosphate and aspartate to form carbamoyl aspartate and inorganic phosphate, the committed step in the de novo pyrimidine nucleotide biosynthesis pathway. In Corynebacterium urealyticum (strain ATCC 43042 / DSM 7109), this protein is Aspartate carbamoyltransferase catalytic subunit.